A 1459-amino-acid polypeptide reads, in one-letter code: Mediator of RNA polymerase II transcription subunit 14 (1459 aa).

Residues Met-1–Pro-37 are disordered. A compositionally biased stretch (gly residues) spans Pro-14–Ser-27. The LXXLL motif 1 motif lies at Leu-75–Leu-79. The segment at Lys-194–Tyr-572 is interaction with STAT2. The tract at residues Leu-506–Trp-830 is interaction with SREBF1. Residues Ser-623 and Ser-992 each carry the phosphoserine modification. Residues Ala-979–Gln-1171 are disordered. 2 stretches are compositionally biased toward polar residues: residues Pro-1029–Ser-1059 and Asp-1097–Ser-1106. Ser-1117, Ser-1124, Ser-1133, Ser-1141, and Ser-1149 each carry phosphoserine. Residues Ala-1152–Thr-1161 are compositionally biased toward polar residues. Residues Leu-1187 to Leu-1191 carry the LXXLL motif 2 motif.

The protein belongs to the Mediator complex subunit 14 family. Component of the Mediator complex, which is composed of MED1, MED4, MED6, MED7, MED8, MED9, MED10, MED11, MED12, MED13, MED13L, MED14, MED15, MED16, MED17, MED18, MED19, MED20, MED21, MED22, MED23, MED24, MED25, MED26, MED27, MED29, MED30, MED31, CCNC, CDK8 and CDC2L6/CDK11. The MED12, MED13, CCNC and CDK8 subunits form a distinct module termed the CDK8 module. Mediator containing the CDK8 module is less active than Mediator lacking this module in supporting transcriptional activation. Individual preparations of the Mediator complex lacking one or more distinct subunits have been variously termed ARC, CRSP, DRIP, PC2, SMCC and TRAP. Interacts with AR, ESR1, SREBF1 and STAT2. Interacts with GATA1.

The protein localises to the nucleus. In terms of biological role, component of the Mediator complex, a coactivator involved in the regulated transcription of nearly all RNA polymerase II-dependent genes. Mediator functions as a bridge to convey information from gene-specific regulatory proteins to the basal RNA polymerase II transcription machinery. Mediator is recruited to promoters by direct interactions with regulatory proteins and serves as a scaffold for the assembly of a functional preinitiation complex with RNA polymerase II and the general transcription factors. This chain is Mediator of RNA polymerase II transcription subunit 14 (Med14), found in Mus musculus (Mouse).